Here is a 168-residue protein sequence, read N- to C-terminus: Nucleoside deoxyribosyltransferase (168 aa).

The Nucleophile role is filled by Glu103.

It belongs to the nucleoside deoxyribosyltransferase family.

The enzyme catalyses 2-deoxy-D-ribosyl-base(1) + base(2) = 2-deoxy-D-ribosyl-base(2) + base(1).. The protein operates within nucleotide metabolism; nucleotide salvage pathway. Catalyzes the cleavage of the glycosidic bond of 2'-deoxyribonucleosides and the transfer of the deoxyribosyl moiety to an acceptor purine or pyrimidine base. This is Nucleoside deoxyribosyltransferase (ntd) from Limosilactobacillus fermentum (Lactobacillus fermentum).